The following is a 185-amino-acid chain: ATP synthase subunit delta (185 aa).

This sequence belongs to the ATPase delta chain family. As to quaternary structure, F-type ATPases have 2 components, F(1) - the catalytic core - and F(0) - the membrane proton channel. F(1) has five subunits: alpha(3), beta(3), gamma(1), delta(1), epsilon(1). F(0) has three main subunits: a(1), b(2) and c(10-14). The alpha and beta chains form an alternating ring which encloses part of the gamma chain. F(1) is attached to F(0) by a central stalk formed by the gamma and epsilon chains, while a peripheral stalk is formed by the delta and b chains.

The protein resides in the cell inner membrane. F(1)F(0) ATP synthase produces ATP from ADP in the presence of a proton or sodium gradient. F-type ATPases consist of two structural domains, F(1) containing the extramembraneous catalytic core and F(0) containing the membrane proton channel, linked together by a central stalk and a peripheral stalk. During catalysis, ATP synthesis in the catalytic domain of F(1) is coupled via a rotary mechanism of the central stalk subunits to proton translocation. Its function is as follows. This protein is part of the stalk that links CF(0) to CF(1). It either transmits conformational changes from CF(0) to CF(1) or is implicated in proton conduction. In Pelagibacter ubique (strain HTCC1062), this protein is ATP synthase subunit delta.